A 385-amino-acid polypeptide reads, in one-letter code: Lipid-A-disaccharide synthase 2 (385 aa).

The protein belongs to the LpxB family.

The enzyme catalyses a lipid X + a UDP-2-N,3-O-bis[(3R)-3-hydroxyacyl]-alpha-D-glucosamine = a lipid A disaccharide + UDP + H(+). It functions in the pathway bacterial outer membrane biogenesis; LPS lipid A biosynthesis. Its function is as follows. Condensation of UDP-2,3-diacylglucosamine and 2,3-diacylglucosamine-1-phosphate to form lipid A disaccharide, a precursor of lipid A, a phosphorylated glycolipid that anchors the lipopolysaccharide to the outer membrane of the cell. This is Lipid-A-disaccharide synthase 2 from Legionella pneumophila (strain Paris).